Consider the following 348-residue polypeptide: MTVMQHTLKIRRPDDWHLHLRDDAMLHSVLPYTSRHFSRAVVMPNLVPPITSVEQCIAYRQRILDAVPQGHAFTPLMTCYLTDALSVDTLMHGQREGVFTAAKLYPANATTNSACGVTSIPGLYPLFEAMQQSGMPLLIHGEVTQADIDIFDREARFIEQVMLPLRRDFPELRIVFEHITTREAAQFVAEGDRYLAATITPQHLMFNRNHMLVGGIHPHLYCLPILKRSVHQQALRKAATSGQTCFFLGTDSAPHLRGRKESACGCAGVFNAPTALQAYATVFEEEQALQHLEAFCSLNGPAFYGLPANEAYIELAQEPASVVDSIASGDETLTPFLAGETLRWSVRA.

Histidine 17 and histidine 19 together coordinate Zn(2+). Substrate is bound by residues 19–21 (HLR) and asparagine 45. Zn(2+) is bound by residues lysine 103, histidine 140, and histidine 178. At lysine 103 the chain carries N6-carboxylysine. Residue histidine 140 participates in substrate binding. Leucine 223 is a substrate binding site. Aspartate 251 lines the Zn(2+) pocket. Aspartate 251 is an active-site residue. Substrate is bound by residues histidine 255 and alanine 267.

This sequence belongs to the metallo-dependent hydrolases superfamily. DHOase family. Class II DHOase subfamily. As to quaternary structure, homodimer. The cofactor is Zn(2+).

It catalyses the reaction (S)-dihydroorotate + H2O = N-carbamoyl-L-aspartate + H(+). Its pathway is pyrimidine metabolism; UMP biosynthesis via de novo pathway; (S)-dihydroorotate from bicarbonate: step 3/3. Its function is as follows. Catalyzes the reversible cyclization of carbamoyl aspartate to dihydroorotate. This is Dihydroorotase from Edwardsiella ictaluri (strain 93-146).